Here is a 237-residue protein sequence, read N- to C-terminus: Phosphatidylserine decarboxylase proenzyme (237 aa).

Ser206 acts as the Schiff-base intermediate with substrate; via pyruvic acid in catalysis. Pyruvic acid (Ser); by autocatalysis is present on Ser206.

Belongs to the phosphatidylserine decarboxylase family. PSD-A subfamily. In terms of assembly, heterodimer of a large membrane-associated beta subunit and a small pyruvoyl-containing alpha subunit. Pyruvate serves as cofactor. Post-translationally, is synthesized initially as an inactive proenzyme. Formation of the active enzyme involves a self-maturation process in which the active site pyruvoyl group is generated from an internal serine residue via an autocatalytic post-translational modification. Two non-identical subunits are generated from the proenzyme in this reaction, and the pyruvate is formed at the N-terminus of the alpha chain, which is derived from the carboxyl end of the proenzyme. The post-translation cleavage follows an unusual pathway, termed non-hydrolytic serinolysis, in which the side chain hydroxyl group of the serine supplies its oxygen atom to form the C-terminus of the beta chain, while the remainder of the serine residue undergoes an oxidative deamination to produce ammonia and the pyruvoyl prosthetic group on the alpha chain.

Its subcellular location is the cell membrane. It catalyses the reaction a 1,2-diacyl-sn-glycero-3-phospho-L-serine + H(+) = a 1,2-diacyl-sn-glycero-3-phosphoethanolamine + CO2. It functions in the pathway phospholipid metabolism; phosphatidylethanolamine biosynthesis; phosphatidylethanolamine from CDP-diacylglycerol: step 2/2. Catalyzes the formation of phosphatidylethanolamine (PtdEtn) from phosphatidylserine (PtdSer). The protein is Phosphatidylserine decarboxylase proenzyme of Nocardia farcinica (strain IFM 10152).